Reading from the N-terminus, the 330-residue chain is MATH domain and coiled-coil domain-containing protein At3g58210 (330 aa).

Positions 6–133 (DNKFTWVIQN…NDELKIVAEV (128 aa)) constitute an MATH domain. The stretch at 263–314 (FKVDWLEKKLEEVKKKKEEEQTGEARIQELEEELKEFKQKCLDREAMLEKEK) forms a coiled coil.

The chain is MATH domain and coiled-coil domain-containing protein At3g58210 from Arabidopsis thaliana (Mouse-ear cress).